The following is a 126-amino-acid chain: Fatty acid-binding protein, liver (126 aa).

Residues 54–56 (TPN), 99–101 (HEQ), and R121 each bind cholate.

This sequence belongs to the calycin superfamily. Fatty-acid binding protein (FABP) family.

The protein localises to the cytoplasm. Its function is as follows. FABPs are thought to play a role in the intracellular transport of long-chain fatty acids and their acyl-CoA esters. This is Fatty acid-binding protein, liver from Anolis pulchellus (Common grass anole).